The following is a 316-amino-acid chain: uncharacterized protein (316 aa).

The 56-residue stretch at 1–56 folds into the HTH lacI-type domain; the sequence is MATLSDVAKKANVSKMTVSRVINHPETVTDELKKLVHSAMKELNYIPNYAARALVQ. Positions 4–23 form a DNA-binding region, H-T-H motif; that stretch reads LSDVAKKANVSKMTVSRVIN.

This is an uncharacterized protein from Bacillus subtilis (strain 168).